We begin with the raw amino-acid sequence, 482 residues long: UDP-N-acetylmuramoyl-L-alanyl-D-glutamate--2,6-diaminopimelate ligase 1 (482 aa).

Ser30 provides a ligand contact to UDP-N-acetyl-alpha-D-muramoyl-L-alanyl-D-glutamate. Residue 110–116 participates in ATP binding; the sequence is GTNGKTT. UDP-N-acetyl-alpha-D-muramoyl-L-alanyl-D-glutamate contacts are provided by residues 152-153, Ser179, and Arg187; that span reads TT. The residue at position 219 (Lys219) is an N6-carboxylysine. Meso-2,6-diaminopimelate-binding positions include Arg378, 402-405, Gly452, and Glu456; that span reads DNPR. The Meso-diaminopimelate recognition motif motif lies at 402–405; the sequence is DNPR.

Belongs to the MurCDEF family. MurE subfamily. It depends on Mg(2+) as a cofactor. Post-translationally, carboxylation is probably crucial for Mg(2+) binding and, consequently, for the gamma-phosphate positioning of ATP.

The protein localises to the cytoplasm. The catalysed reaction is UDP-N-acetyl-alpha-D-muramoyl-L-alanyl-D-glutamate + meso-2,6-diaminopimelate + ATP = UDP-N-acetyl-alpha-D-muramoyl-L-alanyl-gamma-D-glutamyl-meso-2,6-diaminopimelate + ADP + phosphate + H(+). The protein operates within cell wall biogenesis; peptidoglycan biosynthesis. Its function is as follows. Catalyzes the addition of meso-diaminopimelic acid to the nucleotide precursor UDP-N-acetylmuramoyl-L-alanyl-D-glutamate (UMAG) in the biosynthesis of bacterial cell-wall peptidoglycan. In Clostridium acetobutylicum (strain ATCC 824 / DSM 792 / JCM 1419 / IAM 19013 / LMG 5710 / NBRC 13948 / NRRL B-527 / VKM B-1787 / 2291 / W), this protein is UDP-N-acetylmuramoyl-L-alanyl-D-glutamate--2,6-diaminopimelate ligase 1.